The chain runs to 828 residues: Sarcolemmal membrane-associated protein (828 aa).

The necessary for targeting to centrosomes stretch occupies residues 1-163 (MPSALAIFTC…AANTPSMYSQ (163 aa)). Over 1-802 (MPSALAIFTC…REKGNNKPWP (802 aa)) the chain is Cytoplasmic. Positions 28 to 85 (IKIGRSVARCRPAQNNATFDCKVLSRNHALVWFDHKTGKFYLQDTKSSNGTFINSQRL) constitute an FHA domain. The residue at position 148 (S148) is a Phosphoserine. Coiled coils occupy residues 167-202 (QLSQ…ASDT) and 230-388 (NQTE…QEKT). Residues 339 to 359 (KKELQHKIDEMEEKEQELQAK) traverse the membrane as a helical; Anchor for type IV membrane protein segment. Positions 433–446 (KLSKENQTRAKESD) are enriched in basic and acidic residues. Positions 433–467 (KLSKENQTRAKESDFSDTLSPSKEKSSDDTTDAQM) are disordered. 2 positions are modified to phosphoserine: S448 and S452. A coiled-coil region spans residues 477–799 (AKVSLLKDDL…KLLREKGNNK (323 aa)). A helical; Anchor for type IV membrane protein transmembrane segment spans residues 803 to 823 (WMPMLAALVAVTAIVLYVPGL). Residues 824–828 (ARASP) are Extracellular-facing.

It belongs to the SLMAP family. Homodimer. Interacts with myosin. Interacts with SIKE1 and both associate with the STRIPAK core complex composed of PP2A catalytic and scaffolding subunits, the striatins (PP2A regulatory subunits), the striatin-associated proteins MOB4, STRIP1 and STRIP2, PDCD10 and members of the STE20 kinases, such as STK24 and STK26. Interacts (via FHA domain) with STK3 (when phosphorylated); the interaction associates STK3 with the STRIPAK complex.

It localises to the cell membrane. Its subcellular location is the sarcolemma. The protein resides in the cytoplasm. The protein localises to the myofibril. It is found in the sarcomere. It localises to the m line. Its subcellular location is the z line. The protein resides in the cytoskeleton. The protein localises to the microtubule organizing center. It is found in the centrosome. It localises to the endoplasmic reticulum membrane. Its subcellular location is the mitochondrion membrane. In terms of biological role, associates with the striatin-interacting phosphatase and kinase (STRIPAK) core complex, forming the extended (SIKE1:SLMAP)STRIPAK complex. The (SIKE1:SLMAP)STRIPAK complex dephosphorylates STK3 leading to the inhibition of Hippo signaling and the control of cell growth. May play a role during myoblast fusion. The sequence is that of Sarcolemmal membrane-associated protein from Homo sapiens (Human).